A 273-amino-acid polypeptide reads, in one-letter code: Acetyl-coenzyme A carboxylase carboxyl transferase subunit alpha (273 aa).

Positions 1–244 constitute a CoA carboxyltransferase C-terminal domain; that stretch reads MKKATQSKAW…KVVLKQALDE (244 aa).

This sequence belongs to the AccA family. As to quaternary structure, acetyl-CoA carboxylase is a heterohexamer composed of biotin carboxyl carrier protein (AccB), biotin carboxylase (AccC) and two subunits each of ACCase subunit alpha (AccA) and ACCase subunit beta (AccD).

Its subcellular location is the cytoplasm. It catalyses the reaction N(6)-carboxybiotinyl-L-lysyl-[protein] + acetyl-CoA = N(6)-biotinyl-L-lysyl-[protein] + malonyl-CoA. The protein operates within lipid metabolism; malonyl-CoA biosynthesis; malonyl-CoA from acetyl-CoA: step 1/1. Its function is as follows. Component of the acetyl coenzyme A carboxylase (ACC) complex. First, biotin carboxylase catalyzes the carboxylation of biotin on its carrier protein (BCCP) and then the CO(2) group is transferred by the carboxyltransferase to acetyl-CoA to form malonyl-CoA. The polypeptide is Acetyl-coenzyme A carboxylase carboxyl transferase subunit alpha (Acinetobacter baumannii (strain ACICU)).